The chain runs to 248 residues: 3-oxoacyl-[acyl-carrier-protein] reductase FabG (248 aa).

NADP(+) is bound by residues 14 to 17, 64 to 65, and Asn-91; these read GGSR and DV. Ser-143 provides a ligand contact to substrate. Catalysis depends on Tyr-156, which acts as the Proton acceptor. Residues 156–160 and Ile-189 each bind NADP(+); that span reads YAAAK.

The protein belongs to the short-chain dehydrogenases/reductases (SDR) family. Homotetramer.

The enzyme catalyses a (3R)-hydroxyacyl-[ACP] + NADP(+) = a 3-oxoacyl-[ACP] + NADPH + H(+). Its pathway is lipid metabolism; fatty acid biosynthesis. In terms of biological role, catalyzes the NADPH-dependent reduction of beta-ketoacyl-ACP substrates to beta-hydroxyacyl-ACP products, the first reductive step in the elongation cycle of fatty acid biosynthesis. This is 3-oxoacyl-[acyl-carrier-protein] reductase FabG (fabG) from Chlamydia pneumoniae (Chlamydophila pneumoniae).